The chain runs to 68 residues: Small proline-rich protein 2K (68 aa).

A 1; truncated repeat occupies 21 to 26; the sequence is PKPCSP. The 3.5 X 9 AA approximate tandem repeats stretch occupies residues 21–65; it reads PKPCSPPKCPEPCPPPKCPETCPPQPCQRKCPPVLEAPCQQKCPS. A run of 3 repeats spans residues 27-35, 36-44, and 45-53.

The protein belongs to the cornifin (SPRR) family. In terms of tissue distribution, not expressed in uterus.

It is found in the cytoplasm. Cross-linked envelope protein of keratinocytes. It is a keratinocyte protein that first appears in the cell cytosol, but ultimately becomes cross-linked to membrane proteins by transglutaminase. All that results in the formation of an insoluble envelope beneath the plasma membrane. This Mus musculus (Mouse) protein is Small proline-rich protein 2K (Sprr2k).